The following is a 552-amino-acid chain: MPPERKSRTRRDRRAGATPGRKARPGSGSTPAKAARSSQRTQPAEPRAAPSAGSAAAAAEEEESRLRQRNRLTLEDDKPAAERCLEQLVFGDVEDDEDALLQRLRSSRGQLHGSSDESEVENEAKDIFSQKKKQPVWVDEDDEDEEIVDMSNNRFRKDIMKNASESKLSKDKLQKRLKEEFQHAMGGVPDWAEAGSKRRTSSDDESEEDEDDLLQRTGNFISTSTSLPRGILKMKNCRPANAERPTTARISSVQFHPGAQVVMVSGVDNAISLFQVDGKTNPKIQSIYLEKFPIFKACFSANGEEVLATSMHSKVLYVYDMLAGKLIPVHQVRGLKEKTVKQFEVSPDGSFLLISGIAGFSHLLSMKTKELIGSMKINGRIAASTFSSDSKRIYTYSENGEVYVWDVNSRKCMNRFLDEGSLCGLSIAASKNGQYVACGSKSGVVNIYNQDSCLQQTNPKPIKAIMNLVTGVTSLAFNPTTEILAVASRKMKEAVRLVHLPSCTVFSNFPVFKKSTLSRVQTMDFSPRGGYFALGNEKGRALMYRLHHYSDF.

Disordered stretches follow at residues 1-81 and 104-143; these read MPPE…KPAA and LRSS…EDDE. The segment covering 43–58 has biased composition (low complexity); that stretch reads PAEPRAAPSAGSAAAA. Over residues 72–81 the composition is skewed to basic and acidic residues; sequence LTLEDDKPAA. Residue Lys78 forms a Glycyl lysine isopeptide (Lys-Gly) (interchain with G-Cter in SUMO2) linkage. A phosphoserine mark is found at Ser114, Ser115, and Ser118. Residues Lys178 and Lys197 each participate in a glycyl lysine isopeptide (Lys-Gly) (interchain with G-Cter in SUMO2) cross-link. Positions 183 to 214 are disordered; it reads HAMGGVPDWAEAGSKRRTSSDDESEEDEDDLL. Position 200 is a phosphothreonine (Thr200). Phosphoserine occurs at positions 201, 202, and 206. Acidic residues predominate over residues 203-212; that stretch reads DDESEEDEDD. Phosphothreonine is present on Thr217. WD repeat units follow at residues 245–284, 289–329, 376–415, 417–458, and 467–508; these read PTTA…NPKI, LEKF…LIPV, KING…CMNR, LDEG…QQTN, and NLVT…VFSN. A Glycyl lysine isopeptide (Lys-Gly) (interchain with G-Cter in SUMO2) cross-link involves residue Lys513. The stretch at 515–551 is one WD 6 repeat; that stretch reads STLSRVQTMDFSPRGGYFALGNEKGRALMYRLHHYSD.

The protein belongs to the WD repeat UTP18 family. In terms of assembly, part of the small subunit (SSU) processome, composed of more than 70 proteins and the RNA chaperone small nucleolar RNA (snoRNA) U3.

The protein localises to the nucleus. Its subcellular location is the nucleolus. In terms of biological role, part of the small subunit (SSU) processome, first precursor of the small eukaryotic ribosomal subunit. During the assembly of the SSU processome in the nucleolus, many ribosome biogenesis factors, an RNA chaperone and ribosomal proteins associate with the nascent pre-rRNA and work in concert to generate RNA folding, modifications, rearrangements and cleavage as well as targeted degradation of pre-ribosomal RNA by the RNA exosome. Involved in nucleolar processing of pre-18S ribosomal RNA. In Mus musculus (Mouse), this protein is U3 small nucleolar RNA-associated protein 18 homolog (Utp18).